Consider the following 715-residue polypeptide: Ribosomal RNA large subunit methyltransferase K/L (715 aa).

Positions threonine 43–leucine 154 constitute a THUMP domain.

It belongs to the methyltransferase superfamily. RlmKL family.

The protein localises to the cytoplasm. It catalyses the reaction guanosine(2445) in 23S rRNA + S-adenosyl-L-methionine = N(2)-methylguanosine(2445) in 23S rRNA + S-adenosyl-L-homocysteine + H(+). The enzyme catalyses guanosine(2069) in 23S rRNA + S-adenosyl-L-methionine = N(2)-methylguanosine(2069) in 23S rRNA + S-adenosyl-L-homocysteine + H(+). Its function is as follows. Specifically methylates the guanine in position 2445 (m2G2445) and the guanine in position 2069 (m7G2069) of 23S rRNA. The polypeptide is Ribosomal RNA large subunit methyltransferase K/L (Mannheimia succiniciproducens (strain KCTC 0769BP / MBEL55E)).